A 218-amino-acid chain; its full sequence is uncharacterized protein (218 aa).

Zn(2+)-binding residues include His-57, His-59, Asp-61, His-62, His-138, Asp-158, and His-199.

Belongs to the metallo-beta-lactamase superfamily. Glyoxalase II family. It depends on Zn(2+) as a cofactor.

This is an uncharacterized protein from Mycobacterium leprae (strain TN).